The chain runs to 406 residues: Cysteine desulfurase IscS (406 aa).

Pyridoxal 5'-phosphate contacts are provided by residues 75-76, asparagine 155, glutamine 183, and 203-205; these read AT and SSH. N6-(pyridoxal phosphate)lysine is present on lysine 206. Threonine 243 contacts pyridoxal 5'-phosphate. The Cysteine persulfide intermediate role is filled by cysteine 330. Cysteine 330 is a [2Fe-2S] cluster binding site.

The protein belongs to the class-V pyridoxal-phosphate-dependent aminotransferase family. NifS/IscS subfamily. In terms of assembly, homodimer. Forms a heterotetramer with IscU, interacts with other sulfur acceptors. Requires pyridoxal 5'-phosphate as cofactor.

It localises to the cytoplasm. The catalysed reaction is (sulfur carrier)-H + L-cysteine = (sulfur carrier)-SH + L-alanine. The protein operates within cofactor biosynthesis; iron-sulfur cluster biosynthesis. Functionally, master enzyme that delivers sulfur to a number of partners involved in Fe-S cluster assembly, tRNA modification or cofactor biosynthesis. Catalyzes the removal of elemental sulfur atoms from cysteine to produce alanine. Functions as a sulfur delivery protein for Fe-S cluster synthesis onto IscU, an Fe-S scaffold assembly protein, as well as other S acceptor proteins. The sequence is that of Cysteine desulfurase IscS from Haemophilus ducreyi (strain 35000HP / ATCC 700724).